We begin with the raw amino-acid sequence, 448 residues long: Protein king tubby (448 aa).

The segment at 103 to 195 is disordered; it reads HELEDEESSP…NGTGGESEGD (93 aa). Over residues 118 to 133 the composition is skewed to low complexity; sequence QHQQSASHSANSTQSQ. Ser141 carries the phosphoserine modification. Residues 182–191 are compositionally biased toward gly residues; the sequence is NGTGNGTGGE.

It belongs to the TUB family.

It localises to the cytoplasm. The protein localises to the nucleus. The protein resides in the cell projection. It is found in the cilium membrane. Its subcellular location is the rhabdomere. The sequence is that of Protein king tubby from Drosophila erecta (Fruit fly).